Here is a 1707-residue protein sequence, read N- to C-terminus: Latrophilin Cirl (1707 aa).

At 1 to 767 the chain is on the extracellular side; that stretch reads MLPTILSISY…LFTMFDGNMR (767 aa). Residues 25-114 form the SUEL-type lectin domain; the sequence is ACEGKKLTIE…KYLEAHYQCI (90 aa). An N-linked (GlcNAc...) asparagine glycan is attached at asparagine 142. The tract at residues 176 to 301 is disordered; sequence GLFNVPPQHT…TAASGAVVPG (126 aa). Polar residues-rich tracts occupy residues 185–198 and 256–265; these read TAVTHSTPSSSTTA and NATSPSNTRI. N-linked (GlcNAc...) asparagine glycosylation is present at asparagine 256. Over residues 275 to 285 the composition is skewed to low complexity; that stretch reads DDGTLLTTKSS. N-linked (GlcNAc...) asparagine glycosylation is found at asparagine 302, asparagine 341, asparagine 398, asparagine 655, asparagine 703, and asparagine 730. Residues 376–400 are disordered; the sequence is YDEYDDDPSSTTPAPNGGDCLHNSS. The region spanning 561-754 is the GAIN-B domain; the sequence is RSVVQKVKNI…AILMDVVDEH (194 aa). 2 disulfide bridges follow: cysteine 709-cysteine 736 and cysteine 724-cysteine 738. Positions 709–754 are GPS; sequence CVFWNYIDHAWSANGCSLESTNRTHSVCSCNHLTNFAILMDVVDEH. The chain crosses the membrane as a helical span at residues 768–788; that stretch reads IFIYISIGICVVFIVIALLTL. The Cytoplasmic portion of the chain corresponds to 789–801; that stretch reads KLFNGVFVKSART. A helical membrane pass occupies residues 802 to 822; that stretch reads SIYTSIYLCLLAIELLFLLGI. At 823–828 the chain is on the extracellular side; it reads EQTETS. A helical transmembrane segment spans residues 829–849; it reads IFCGFITIFLHCAILSGTAWF. Over 850–875 the chain is Cytoplasmic; that stretch reads CYEAFHSYSTLTSDELLLEVDQTPKV. A helical membrane pass occupies residues 876-896; the sequence is NCYYLLSYGLSLSVVAISLVI. At 897 to 920 the chain is on the extracellular side; that stretch reads DPSTYTQNDYCVLMEANALFYATF. The helical transmembrane segment at 921–941 threads the bilayer; it reads VIPVLVFFVAAIGYTFLSWII. The Cytoplasmic segment spans residues 942 to 968; sequence LCRKSRTGLKTKEHTRLASVRFDIRCS. Residues 969 to 989 form a helical membrane-spanning segment; the sequence is FVFLLLLSAVWCSSYFYLRGA. The Extracellular segment spans residues 990–999; the sequence is KMDDDTADVY. Residues 1000 to 1020 traverse the membrane as a helical segment; it reads GYCFICFNTLLGLYIFVFHCI. The Cytoplasmic portion of the chain corresponds to 1021 to 1707; sequence QNEKIRREYR…VRCYLEPLAK (687 aa). A Phosphoserine modification is found at serine 1156. Disordered regions lie at residues 1169-1188 and 1236-1260; these read AHKQQQQQQQQQQGPLGEGY and KPNSGQHGKKKRGAGGVPASPSGSL. Positions 1172-1181 are enriched in low complexity; the sequence is QQQQQQQQQQ. Residues serine 1255 and serine 1262 each carry the phosphoserine modification. Low complexity predominate over residues 1316–1326; sequence QQLHQQQQQQL. 4 disordered regions span residues 1316–1335, 1450–1538, 1563–1582, and 1612–1687; these read QQLHQQQQQQLSSDEEQVEQ, GGGS…SDER, APLDYGALPPGSGPQPEHNG, and GGRL…QQRH. 2 positions are modified to phosphoserine: serine 1327 and serine 1328. The segment covering 1456–1481 has biased composition (low complexity); sequence GGSVSSRSQQQQLKKQQQQQSLAQQR. 2 stretches are compositionally biased toward acidic residues: residues 1489–1503 and 1513–1526; these read DDDDDEEEEEDEEAT and CDEDEEEDESDLED. The segment covering 1635 to 1650 has biased composition (polar residues); it reads QTPAQKRQQLQKLSPQ. Residues 1651 to 1673 show a composition bias toward low complexity; it reads STTSSSSHTSHSNPNPHPLQLTH. Positions 1674–1686 are enriched in basic residues; that stretch reads PHPHQHPPHHQQR.

It belongs to the G-protein coupled receptor 2 family. LN-TM7 subfamily. Forms a heterodimer, consisting of a large extracellular region non-covalently linked to a seven-transmembrane moiety. Post-translationally, proteolytically cleaved into 2 subunits, an extracellular subunit and a seven-transmembrane subunit.

Its subcellular location is the cell membrane. The chain is Latrophilin Cirl from Drosophila yakuba (Fruit fly).